The sequence spans 299 residues: MTSPREEITVRLSCGHPLRVPDGEFCFGDGAYCCDCDERAVFFAPDHLTTVLSKVAPEGLDALTEKSWKLAKAIVTCGTCGDVLYQPVIHERCGHVCCRFCFRDKCAECGLMRTAVRPLPDLERLIQESLFGHDTRGLEYSDKFTAELMGPQGKEVILLYDGALGNVFVDLVTGISAVIADRAEKPIDLVDIVLNPDWSPVPCTIPYRLFRLLVKANAEMGVHDWSDLVTLGAWNILVEYGAVPGLDRSRLLEFLRYLVIPGFDGAETFPALTETFLSILAECTWVGDSRCGYRDACSR.

The sequence is that of Putative zinc-binding protein ORF12 (ORF12) from Ictaluridae (bullhead catfishes).